We begin with the raw amino-acid sequence, 414 residues long: Dual-specificity RNA methyltransferase RlmN (414 aa).

Residues 1–13 are compositionally biased toward polar residues; it reads MTSAVGISVPNTD. A disordered region spans residues 1–22; that stretch reads MTSAVGISVPNTDAQSSQSASQ. The active-site Proton acceptor is the E124. One can recognise a Radical SAM core domain in the interval 134-377; that stretch reads TGSRKTLCIS…CTIRQTRGDD (244 aa). C141 and C382 form a disulfide bridge. [4Fe-4S] cluster-binding residues include C148, C152, and C155. S-adenosyl-L-methionine is bound by residues 204 to 205, S236, 258 to 260, and N339; these read GE and SLH. C382 functions as the S-methylcysteine intermediate in the catalytic mechanism.

This sequence belongs to the radical SAM superfamily. RlmN family. It depends on [4Fe-4S] cluster as a cofactor.

Its subcellular location is the cytoplasm. The enzyme catalyses adenosine(2503) in 23S rRNA + 2 reduced [2Fe-2S]-[ferredoxin] + 2 S-adenosyl-L-methionine = 2-methyladenosine(2503) in 23S rRNA + 5'-deoxyadenosine + L-methionine + 2 oxidized [2Fe-2S]-[ferredoxin] + S-adenosyl-L-homocysteine. It carries out the reaction adenosine(37) in tRNA + 2 reduced [2Fe-2S]-[ferredoxin] + 2 S-adenosyl-L-methionine = 2-methyladenosine(37) in tRNA + 5'-deoxyadenosine + L-methionine + 2 oxidized [2Fe-2S]-[ferredoxin] + S-adenosyl-L-homocysteine. Functionally, specifically methylates position 2 of adenine 2503 in 23S rRNA and position 2 of adenine 37 in tRNAs. m2A2503 modification seems to play a crucial role in the proofreading step occurring at the peptidyl transferase center and thus would serve to optimize ribosomal fidelity. This is Dual-specificity RNA methyltransferase RlmN from Acinetobacter baylyi (strain ATCC 33305 / BD413 / ADP1).